The sequence spans 128 residues: Holo-[acyl-carrier-protein] synthase (128 aa).

Positions 8 and 58 each coordinate Mg(2+).

Belongs to the P-Pant transferase superfamily. AcpS family. The cofactor is Mg(2+).

It is found in the cytoplasm. The catalysed reaction is apo-[ACP] + CoA = holo-[ACP] + adenosine 3',5'-bisphosphate + H(+). Its function is as follows. Transfers the 4'-phosphopantetheine moiety from coenzyme A to a Ser of acyl-carrier-protein. The protein is Holo-[acyl-carrier-protein] synthase of Alkalilimnicola ehrlichii (strain ATCC BAA-1101 / DSM 17681 / MLHE-1).